We begin with the raw amino-acid sequence, 80 residues long: N-V protease (80 aa).

Belongs to the peptidase S8 family. In terms of assembly, monomer. Body cavity.

Its subcellular location is the secreted. Its activity is regulated as follows. Inhibited by the serine protease inhibitors DFP, PMSF and TLCK. Not inhibited by the serine protease inhibitors aprotinin, elastinal, SBTI and benzamidine, the cysteine protease inhibitors iodoacetate and E64, or the metalloprotease inhibitors EDTA and EGTA. Serine protease. Hydrolyzes the alpha chains of fibrin and fibrinogen completely, has lower activity on the beta and gamma chains of fibrin and fibrinogen. This Alitta virens (Sandworm) protein is N-V protease.